A 335-amino-acid polypeptide reads, in one-letter code: Dye-decolorizing peroxidase (335 aa).

Asp149 (proton acceptor) is an active-site residue. His222 provides a ligand contact to heme. The targeting peptide stretch occupies residues 312-335; it reads LPQAATPTLAAGSLSIGSLKGSPR.

The protein belongs to the DyP-type peroxidase family. In terms of assembly, homotetramer, presumably also in the encapsulin nanocompartment. It depends on heme b as a cofactor.

It localises to the encapsulin nanocompartment. The catalysed reaction is 2 a phenolic donor + H2O2 = 2 a phenolic radical donor + 2 H2O. Its function is as follows. Cargo of a type 1 encapsulin nanocompartment in situ; this cargo protects against oxidative stress at low pH. When expressed in the cytoplasm (absence of the encapsulin shell gene) it is almost as protective as the intact nanocompartment; its encapsulation has a modest yet significant effect on protection against oxidative stress at low pH. A heme-dependent peroxidase, it probably does not have deferrochelatase activity. Converts guaiacol and H2O2 to tetraguaiacol, also acts on 2,2'-azino-bis(3-ethylbenzothiazoline-6-sulfonic acid) (ABTS). Retains peroxidase activity when encapsulated but has a reduced set of substrates; acts on ABTS but not guaiacol. This Mycobacterium tuberculosis (strain ATCC 25618 / H37Rv) protein is Dye-decolorizing peroxidase.